The primary structure comprises 299 residues: Myozenin-1 (299 aa).

The tract at residues 1–34 (MPLSGTPAPNKKRKSSKLIMELTGGGQESSGLNL) is disordered. Ser82 carries the phosphoserine modification. A disordered region spans residues 102-174 (GQGFSYSKSN…TGSGDQAGGE (73 aa)). Composition is skewed to gly residues over residues 112–125 (GRGGSQAGGSGSAG) and 137–173 (SGSGAGGTGGPAGQAGRGGAAGTAGVGETGSGDQAGG).

Belongs to the myozenin family. As to quaternary structure, interacts with ACTN2, ACTN3, FLNA, FLNB, FLNC, LDB3, PPP3CA and TCAP. Interacts via its C-terminal region with MYOT. Expressed primarily in skeletal muscle. Detected at lower levels in heart, prostate and pancreas.

The protein localises to the nucleus. It localises to the cell projection. It is found in the pseudopodium. Myozenins may serve as intracellular binding proteins involved in linking Z-disk proteins such as alpha-actinin, gamma-filamin, TCAP/telethonin, LDB3/ZASP and localizing calcineurin signaling to the sarcomere. Plays an important role in the modulation of calcineurin signaling. May play a role in myofibrillogenesis. This Homo sapiens (Human) protein is Myozenin-1.